The primary structure comprises 439 residues: Prenyltransferase iacE (439 aa).

Residues 88–89 (WI), Glu97, Arg112, Lys198, Tyr200, Arg271, Lys273, and Tyr275 each bind substrate.

This sequence belongs to the tryptophan dimethylallyltransferase family.

The catalysed reaction is siccayne + dimethylallyl diphosphate = pestalodiol + diphosphate. It functions in the pathway secondary metabolite biosynthesis. In terms of biological role, prenyltransferase; part of the gene cluster that mediates the biosynthesis of iso-A82775C, a enylepoxycyclohexane and biosynthetic precursor of the chloropestolide anticancer natural products. Within the cluster, the prenyltransferase iacE prenylates siccayne to generate pestalodiol E, using dimethylallyl diphosphate (DMAPP) as cosubstrate. The probable oxidoreductase iacF is then involved in the epoxidation of pestalodiol F to pestalodiol F, which is further converted to pestalofone A by the short-chain dehydrogenase/reductase iacG. Iso-A82775C is subsequently generated from pestalofone A by the short-chain dehydrogenase/reductase iacC. Iso-A82775C is further condensed with maldoxin via a Diels-Alder reaction to produce the anticancer natural products chloropestolides A to E. The polypeptide is Prenyltransferase iacE (Pestalotiopsis fici (strain W106-1 / CGMCC3.15140)).